Reading from the N-terminus, the 220-residue chain is DNA replication complex GINS protein SLD5 (220 aa).

This sequence belongs to the GINS4/SLD5 family. As to quaternary structure, component of the GINS complex. Interacts with EOL1 in the nucleus.

It is found in the nucleus. The GINS complex plays an essential role in the initiation of DNA replication. Required during embryogenesis. This Arabidopsis thaliana (Mouse-ear cress) protein is DNA replication complex GINS protein SLD5.